The primary structure comprises 217 residues: Membrane-associated progesterone receptor component 2 (217 aa).

Ser-15 carries O-linked (Xyl...) (chondroitin sulfate) serine glycosylation. A helical transmembrane segment spans residues 40–62; it reads ALLATGGEMLLNVALVALVLLGA. 3 positions are modified to phosphoserine: Ser-84, Ser-98, and Ser-202. Positions 96–195 constitute a Cytochrome b5 heme-binding domain; it reads DFSLEQLRQY…EKYDYVGRLL (100 aa). The segment at 196–217 is disordered; that stretch reads KPGEEPSEYTDEEDTKDHSKQD. The span at 200–209 shows a compositional bias: acidic residues; the sequence is EPSEYTDEED. A Phosphotyrosine modification is found at Tyr-204. The residue at position 205 (Thr-205) is a Phosphothreonine.

It belongs to the cytochrome b5 family. MAPR subfamily. In terms of assembly, interacts with PGRMC1. Interacts with AAAS.

Its subcellular location is the membrane. It localises to the nucleus envelope. The protein localises to the endoplasmic reticulum. The protein resides in the secreted. Its function is as follows. Required for the maintenance of uterine histoarchitecture and normal female reproductive lifespan. May serve as a universal non-classical progesterone receptor in the uterus. Intracellular heme chaperone required for delivery of labile, or signaling heme, to the nucleus. Plays a role in adipocyte function and systemic glucose homeostasis. In brown fat, which has a high demand for heme, delivery of labile heme in the nucleus regulates the activity of heme-responsive transcriptional repressors such as NR1D1 and BACH1. This Rattus norvegicus (Rat) protein is Membrane-associated progesterone receptor component 2.